Reading from the N-terminus, the 179-residue chain is Cell division protein SepF (179 aa).

The interval 22–53 (LPYEKRDEPVFTPVNSSQEPALPMNQPSQSVG) is disordered. The segment covering 34–53 (PVNSSQEPALPMNQPSQSVG) has biased composition (polar residues).

This sequence belongs to the SepF family. Homodimer. Interacts with FtsZ.

Its subcellular location is the cytoplasm. Its function is as follows. Cell division protein that is part of the divisome complex and is recruited early to the Z-ring. Probably stimulates Z-ring formation, perhaps through the cross-linking of FtsZ protofilaments. Its function overlaps with FtsA. This Streptococcus pneumoniae (strain P1031) protein is Cell division protein SepF.